Here is a 154-residue protein sequence, read N- to C-terminus: 6,7-dimethyl-8-ribityllumazine synthase (154 aa).

Residues Phe22, 57–59 (AYE), and 81–83 (AVI) contribute to the 5-amino-6-(D-ribitylamino)uracil site. Position 86-87 (86-87 (GT)) interacts with (2S)-2-hydroxy-3-oxobutyl phosphate. His89 serves as the catalytic Proton donor. Phe114 contacts 5-amino-6-(D-ribitylamino)uracil. Arg128 lines the (2S)-2-hydroxy-3-oxobutyl phosphate pocket.

It belongs to the DMRL synthase family. Forms an icosahedral capsid composed of 60 subunits, arranged as a dodecamer of pentamers.

It carries out the reaction (2S)-2-hydroxy-3-oxobutyl phosphate + 5-amino-6-(D-ribitylamino)uracil = 6,7-dimethyl-8-(1-D-ribityl)lumazine + phosphate + 2 H2O + H(+). It participates in cofactor biosynthesis; riboflavin biosynthesis; riboflavin from 2-hydroxy-3-oxobutyl phosphate and 5-amino-6-(D-ribitylamino)uracil: step 1/2. Functionally, catalyzes the formation of 6,7-dimethyl-8-ribityllumazine by condensation of 5-amino-6-(D-ribitylamino)uracil with 3,4-dihydroxy-2-butanone 4-phosphate. This is the penultimate step in the biosynthesis of riboflavin. The polypeptide is 6,7-dimethyl-8-ribityllumazine synthase (Colwellia psychrerythraea (strain 34H / ATCC BAA-681) (Vibrio psychroerythus)).